The primary structure comprises 170 residues: uncharacterized protein (170 aa).

The first 28 residues, methionine 1–alanine 28, serve as a signal peptide directing secretion.

The protein belongs to the fimbrial protein family.

Functionally, part of the yfcOPQRSUV fimbrial operon. Could contribute to adhesion to various surfaces in specific environmental niches. Increases adhesion to eukaryotic T24 bladder epithelial cells in the absence of fim genes. This is an uncharacterized protein from Escherichia coli (strain K12).